A 665-amino-acid chain; its full sequence is Transketolase 1 (665 aa).

H26 serves as a coordination point for substrate. Thiamine diphosphate is bound by residues H66 and 114–116; that span reads GPL. D155 is a binding site for Mg(2+). 2 residues coordinate thiamine diphosphate: G156 and N185. Mg(2+)-binding residues include N185 and I187. Substrate contacts are provided by H261, R358, and S385. Residue H261 participates in thiamine diphosphate binding. E412 acts as the Proton donor in catalysis. Residue F438 coordinates thiamine diphosphate. Residues H462, D470, and R521 each coordinate substrate.

Belongs to the transketolase family. As to quaternary structure, homodimer. Requires Mg(2+) as cofactor. The cofactor is Ca(2+). Mn(2+) serves as cofactor. It depends on Co(2+) as a cofactor. Thiamine diphosphate is required as a cofactor.

It catalyses the reaction D-sedoheptulose 7-phosphate + D-glyceraldehyde 3-phosphate = aldehydo-D-ribose 5-phosphate + D-xylulose 5-phosphate. Functionally, catalyzes the transfer of a two-carbon ketol group from a ketose donor to an aldose acceptor, via a covalent intermediate with the cofactor thiamine pyrophosphate. This chain is Transketolase 1 (tkt1), found in Vibrio cholerae serotype O1 (strain ATCC 39315 / El Tor Inaba N16961).